A 651-amino-acid polypeptide reads, in one-letter code: Acetyl-coenzyme A synthetase (651 aa).

CoA-binding positions include R191–K194, T311, and N335. ATP contacts are provided by residues G387–P389, D411–T416, D500, and R515. S523 contacts CoA. Position 526 (R526) interacts with ATP. 3 residues coordinate Mg(2+): V537, H539, and V542. R584 contributes to the CoA binding site. An N6-acetyllysine modification is found at K609.

Belongs to the ATP-dependent AMP-binding enzyme family. Mg(2+) is required as a cofactor. In terms of processing, acetylated. Deacetylation by the SIR2-homolog deacetylase activates the enzyme.

The catalysed reaction is acetate + ATP + CoA = acetyl-CoA + AMP + diphosphate. Functionally, catalyzes the conversion of acetate into acetyl-CoA (AcCoA), an essential intermediate at the junction of anabolic and catabolic pathways. AcsA undergoes a two-step reaction. In the first half reaction, AcsA combines acetate with ATP to form acetyl-adenylate (AcAMP) intermediate. In the second half reaction, it can then transfer the acetyl group from AcAMP to the sulfhydryl group of CoA, forming the product AcCoA. This chain is Acetyl-coenzyme A synthetase, found in Pseudomonas syringae pv. tomato (strain ATCC BAA-871 / DC3000).